The chain runs to 207 residues: uncharacterized protein (207 aa).

Disordered stretches follow at residues 1–81 (MNPT…GNTR) and 140–169 (TSQS…PPKK). Over residues 21-40 (FEQTNSSASLTQKNSSSETE) the composition is skewed to polar residues. A compositionally biased stretch (basic residues) spans 58–70 (PTKRGSGRGRGRS). A compositionally biased stretch (polar residues) spans 140-152 (TSQSIDAQPTPSQ). A compositionally biased stretch (basic and acidic residues) spans 156–165 (AHHEPHEKRG).

The protein resides in the nucleus. Its subcellular location is the nucleolus. This is an uncharacterized protein from Schizosaccharomyces pombe (strain 972 / ATCC 24843) (Fission yeast).